Consider the following 166-residue polypeptide: Large ribosomal subunit protein uL10 (166 aa).

It belongs to the universal ribosomal protein uL10 family. Part of the ribosomal stalk of the 50S ribosomal subunit. The N-terminus interacts with L11 and the large rRNA to form the base of the stalk. The C-terminus forms an elongated spine to which L12 dimers bind in a sequential fashion forming a multimeric L10(L12)X complex.

In terms of biological role, forms part of the ribosomal stalk, playing a central role in the interaction of the ribosome with GTP-bound translation factors. This Shouchella clausii (strain KSM-K16) (Alkalihalobacillus clausii) protein is Large ribosomal subunit protein uL10.